Here is a 194-residue protein sequence, read N- to C-terminus: Fibroblast growth factor 4 (194 aa).

The first 23 residues, 1 to 23 (MLSAAALLPALLLGLLWPGAVRG), serve as a signal peptide directing secretion.

The protein belongs to the heparin-binding growth factors family. In terms of assembly, reciprocal interactions may create a positive feedback loop between sonic hedgehog (SHH) and FGF4. Posterior ridge.

The protein resides in the secreted. Functionally, plays an important role in the regulation of embryonic development, cell proliferation, and cell differentiation. Required for normal limb development during embryogenesis. This Gallus gallus (Chicken) protein is Fibroblast growth factor 4 (FGF4).